The primary structure comprises 233 residues: 2-phytyl-1,4-naphtoquinone methyltransferase (233 aa).

The protein belongs to the class I-like SAM-binding methyltransferase superfamily. MenG/UbiE family.

It carries out the reaction demethylphylloquinol + S-adenosyl-L-methionine = phylloquinol + S-adenosyl-L-homocysteine + H(+). Its pathway is cofactor biosynthesis; phylloquinone biosynthesis. Its function is as follows. Methyltransferase required for the conversion of 2-phytyl-1,4-beta-naphthoquinol to phylloquinol. This chain is 2-phytyl-1,4-naphtoquinone methyltransferase, found in Synechococcus elongatus (strain ATCC 33912 / PCC 7942 / FACHB-805) (Anacystis nidulans R2).